Here is a 207-residue protein sequence, read N- to C-terminus: Ribosomal RNA large subunit methyltransferase E (207 aa).

S-adenosyl-L-methionine is bound by residues G60, W62, D80, D96, and D121. K161 (proton acceptor) is an active-site residue.

It belongs to the class I-like SAM-binding methyltransferase superfamily. RNA methyltransferase RlmE family.

Its subcellular location is the cytoplasm. It catalyses the reaction uridine(2552) in 23S rRNA + S-adenosyl-L-methionine = 2'-O-methyluridine(2552) in 23S rRNA + S-adenosyl-L-homocysteine + H(+). Its function is as follows. Specifically methylates the uridine in position 2552 of 23S rRNA at the 2'-O position of the ribose in the fully assembled 50S ribosomal subunit. This chain is Ribosomal RNA large subunit methyltransferase E, found in Azotobacter vinelandii (strain DJ / ATCC BAA-1303).